A 287-amino-acid polypeptide reads, in one-letter code: 3-hydroxyanthranilate 3,4-dioxygenase (287 aa).

The interval 1–163 (MTNQSLHVNI…SKENETGKPD (163 aa)) is domain A (catalytic). An O2-binding site is contributed by Arg46. Fe cation contacts are provided by His50, Glu56, and His94. Glu56 contributes to the substrate binding site. Positions 98 and 108 each coordinate substrate. The linker stretch occupies residues 164–180 (PANPIKPAPYPLNTMNV). Positions 181–287 (MTPFSFREWV…AQDPDRKRPY (107 aa)) are domain B.

The protein belongs to the 3-HAO family. Monomer. Requires Fe(2+) as cofactor.

The protein resides in the cytoplasm. The protein localises to the cytosol. It carries out the reaction 3-hydroxyanthranilate + O2 = (2Z,4Z)-2-amino-3-carboxymuconate 6-semialdehyde. It functions in the pathway cofactor biosynthesis; NAD(+) biosynthesis; quinolinate from L-kynurenine: step 3/3. In terms of biological role, catalyzes the oxidative ring opening of 3-hydroxyanthranilate to 2-amino-3-carboxymuconate semialdehyde, which spontaneously cyclizes to quinolinate. The polypeptide is 3-hydroxyanthranilate 3,4-dioxygenase (haao) (Danio rerio (Zebrafish)).